A 390-amino-acid polypeptide reads, in one-letter code: Cell adhesion molecule 4 (390 aa).

The first 27 residues, methionine 1–serine 27, serve as a signal peptide directing secretion. The Ig-like V-type domain occupies glutamine 28–threonine 122. Topologically, residues glutamine 28 to alanine 326 are extracellular. N-linked (GlcNAc...) asparagine glycans are attached at residues asparagine 34 and asparagine 70. Intrachain disulfides connect cysteine 47/cysteine 107, cysteine 148/cysteine 202, and cysteine 247/cysteine 293. 2 consecutive Ig-like C2-type domains span residues proline 127–glutamate 219 and proline 226–valine 309. Asparagine 264 and asparagine 288 each carry an N-linked (GlcNAc...) asparagine glycan. Residues valine 327–valine 347 traverse the membrane as a helical segment. The Cytoplasmic segment spans residues tryptophan 348 to isoleucine 390.

This sequence belongs to the nectin family.

It is found in the membrane. Involved in the cell-cell adhesion. The protein is Cell adhesion molecule 4 (cadm4) of Xenopus laevis (African clawed frog).